Reading from the N-terminus, the 317-residue chain is MSAGGEHLKDEGTRRQVVLSGGIAGLVSRFCVAPLDVVKIRLQLQIHSLSDPASHRDVVGPIYKGTLSTMRAIIKQEGITGLWKGNIPAELMYVCYGALQFTAYRTTTQVLAQLDPHRLPPALESFVSGAVAGGLATASTYPLDLLRTRFAAQGTERIYTSLLASVQDIARNEGPAGFFRGCSAAVGQIVPYMGLFFATYESLRPVLSGLENMPFGSGDAAAGVIASVLAKTGVFPLDLVRKRLQVQGPTRTLYVHRNIPEYRGVFSTIAMIVRTQGVRGLYRGLTVSLIKAAPASAITMWTYERSLKLLHDFRVAE.

Solcar repeat units follow at residues 12-110 (GTRR…TTQV), 120-206 (PPAL…LRPV), and 214-309 (PFGS…SLKL). Helical transmembrane passes span 17–35 (VVLSGGIAGLVSRFCVAPL), 91–107 (LMYVCYGALQFTAYRTT), 126–146 (FVSGAVAGGLATASTYPLDLL), 181–198 (GCSAAVGQIVPYMGLFFA), 220–240 (AAAGVIASVLAKTGVFPLDLV), and 284–301 (GLTVSLIKAAPASAITMW).

This sequence belongs to the mitochondrial carrier (TC 2.A.29) family.

The protein resides in the mitochondrion inner membrane. In terms of biological role, mitochondrial transporter that mediates uptake of thiamine pyrophosphate (ThPP) into mitochondria. This is Mitochondrial thiamine pyrophosphate carrier 1 (tpc1) from Neosartorya fischeri (strain ATCC 1020 / DSM 3700 / CBS 544.65 / FGSC A1164 / JCM 1740 / NRRL 181 / WB 181) (Aspergillus fischerianus).